Reading from the N-terminus, the 901-residue chain is HTH-type transcriptional regulator MalT (901 aa).

39 to 46 (SPAGYGKT) is an ATP binding site. In terms of domain architecture, HTH luxR-type spans 829-894 (ELIRTSPLTQ…DAVQHAQQLL (66 aa)). Positions 853-872 (NEQIAGELEVAATTIKTHIR) form a DNA-binding region, H-T-H motif.

It belongs to the MalT family. As to quaternary structure, monomer in solution. Oligomerizes to an active state in the presence of the positive effectors ATP and maltotriose.

With respect to regulation, activated by ATP and maltotriose, which are both required for DNA binding. Positively regulates the transcription of the maltose regulon whose gene products are responsible for uptake and catabolism of malto-oligosaccharides. Specifically binds to the promoter region of its target genes, recognizing a short DNA motif called the MalT box. This Escherichia coli (strain ATCC 8739 / DSM 1576 / NBRC 3972 / NCIMB 8545 / WDCM 00012 / Crooks) protein is HTH-type transcriptional regulator MalT.